A 151-amino-acid polypeptide reads, in one-letter code: Small ribosomal subunit protein uS11 (151 aa).

The disordered stretch occupies residues 129 to 151 (IEDVTPVPSDSTRRKGGRRGRRL). Positions 142-151 (RKGGRRGRRL) are enriched in basic residues.

Belongs to the universal ribosomal protein uS11 family.

This is Small ribosomal subunit protein uS11 (RPS14) from Procambarus clarkii (Red swamp crayfish).